A 298-amino-acid polypeptide reads, in one-letter code: Octopine catabolism/uptake operon regulatory protein OccR (298 aa).

Positions 1–58 constitute an HTH lysR-type domain; that stretch reads MNLRQVEAFRAVMLTGQMTAAAELMLVTQPAISRLIKDFEQATKLQLFERRGNHIIPT. Positions 18 to 37 form a DNA-binding region, H-T-H motif; the sequence is MTAAAELMLVTQPAISRLIK.

This sequence belongs to the LysR transcriptional regulatory family.

Positive regulatory protein for the occ operon involved in octopine catabolism and uptake. Also acts as a negative regulator of its expression. This is Octopine catabolism/uptake operon regulatory protein OccR (occR) from Agrobacterium tumefaciens (strain Ach5).